A 204-amino-acid chain; its full sequence is ATP-dependent Clp protease proteolytic subunit (204 aa).

Residue Ser-102 is the Nucleophile of the active site. The active site involves His-127.

It belongs to the peptidase S14 family. As to quaternary structure, fourteen ClpP subunits assemble into 2 heptameric rings which stack back to back to give a disk-like structure with a central cavity, resembling the structure of eukaryotic proteasomes.

It is found in the cytoplasm. It carries out the reaction Hydrolysis of proteins to small peptides in the presence of ATP and magnesium. alpha-casein is the usual test substrate. In the absence of ATP, only oligopeptides shorter than five residues are hydrolyzed (such as succinyl-Leu-Tyr-|-NHMec, and Leu-Tyr-Leu-|-Tyr-Trp, in which cleavage of the -Tyr-|-Leu- and -Tyr-|-Trp bonds also occurs).. Cleaves peptides in various proteins in a process that requires ATP hydrolysis. Has a chymotrypsin-like activity. Plays a major role in the degradation of misfolded proteins. In Neisseria meningitidis serogroup A / serotype 4A (strain DSM 15465 / Z2491), this protein is ATP-dependent Clp protease proteolytic subunit.